Here is a 373-residue protein sequence, read N- to C-terminus: DNA dC-&gt;dU-editing enzyme APOBEC-3F (373 aa).

CMP/dCMP-type deaminase domains follow at residues 29-137 (RRNT…LCRL) and 174-321 (DDNY…LRSL). Lys-52 is covalently cross-linked ((Microbial infection) Glycyl lysine isopeptide (Lys-Gly) (interchain with G-Cter in ubiquitin)). Residues His-65, Cys-96, and Cys-99 each contribute to the Zn(2+) site. Lys-234 participates in a covalent cross-link: (Microbial infection) Glycyl lysine isopeptide (Lys-Gly) (interchain with G-Cter in ubiquitin). His-249 is a Zn(2+) binding site. Residue Glu-251 is the Proton donor of the active site. Zn(2+) is bound by residues Cys-280 and Cys-283. Residues Cys-280 and Cys-283 are joined by a disulfide bond. (Microbial infection) Glycyl lysine isopeptide (Lys-Gly) (interchain with G-Cter in ubiquitin) cross-links involve residues Lys-334, Lys-352, Lys-355, and Lys-358.

The protein belongs to the cytidine and deoxycytidylate deaminase family. Homodimer. Interacts with APOBEC3G in an RNA-dependent manner. Interacts with AGO1, AGO2 and AGO3. In terms of assembly, (Microbial infection) Interacts with HIV-1 Vif, leading to its ubiquitination and degradation by the proteasome. In the absence of Vif protein, specifically packaged into HIV-1 virions. Requires Zn(2+) as cofactor. In terms of processing, (Microbial infection) Following infection by HIV-1, ubiquitinated by a cullin-5-RING E3 ubiquitin-protein ligase complex (ECS complex) hijacked by the HIV-1 Vif protein, leading to its degradation. In terms of tissue distribution, widely expressed. Highly expressed in ovary.

It localises to the cytoplasm. The protein localises to the P-body. It catalyses the reaction a 2'-deoxycytidine in single-stranded DNA + H2O + H(+) = a 2'-deoxyuridine in single-stranded DNA + NH4(+). (Microbial infection) Antiviral activity is neutralized by the HIV-1 virion infectivity factor (Vif), that prevents its incorporation into progeny virions by both inhibiting its translation and/or by inducing its ubiquitination and subsequent degradation by the 26S proteasome. Functionally, DNA deaminase (cytidine deaminase) which acts as an inhibitor of retrovirus replication and retrotransposon mobility via deaminase-dependent and -independent mechanisms. Exhibits antiviral activity against viruse such as HIV-1 or HIV-2. After the penetration of retroviral nucleocapsids into target cells of infection and the initiation of reverse transcription, it can induce the conversion of cytosine to uracil in the minus-sense single-strand viral DNA, leading to G-to-A hypermutations in the subsequent plus-strand viral DNA. The resultant detrimental levels of mutations in the proviral genome, along with a deamination-independent mechanism that works prior to the proviral integration, together exert efficient antiretroviral effects in infected target cells. Selectively targets single-stranded DNA and does not deaminate double-stranded DNA or single- or double-stranded RNA. Exhibits antiviral activity also against hepatitis B virus (HBV), equine infectious anemia virus (EIAV), xenotropic MuLV-related virus (XMRV) and simian foamy virus (SFV) and may inhibit the mobility of LTR and non-LTR retrotransposons. May also play a role in the epigenetic regulation of gene expression through the process of active DNA demethylation. This chain is DNA dC-&gt;dU-editing enzyme APOBEC-3F, found in Homo sapiens (Human).